The following is a 202-amino-acid chain: IMP cyclohydrolase (202 aa).

The protein belongs to the archaeal IMP cyclohydrolase family.

It carries out the reaction IMP + H2O = 5-formamido-1-(5-phospho-D-ribosyl)imidazole-4-carboxamide. Its pathway is purine metabolism; IMP biosynthesis via de novo pathway; IMP from 5-formamido-1-(5-phospho-D-ribosyl)imidazole-4-carboxamide: step 1/1. Functionally, catalyzes the cyclization of 5-formylamidoimidazole-4-carboxamide ribonucleotide to IMP. The sequence is that of IMP cyclohydrolase (purO) from Methanocaldococcus jannaschii (strain ATCC 43067 / DSM 2661 / JAL-1 / JCM 10045 / NBRC 100440) (Methanococcus jannaschii).